Consider the following 644-residue polypeptide: (E2-independent) E3 ubiquitin-conjugating enzyme FATS (644 aa).

Residues 1-67 (MISPVVISRL…LGILTPSDDQ (67 aa)) form a required for interaction with p53/TP53 region. 4 disordered regions span residues 62–83 (TPSD…LGKG), 305–349 (LGSG…SSHT), 367–413 (VLSG…SILS), and 475–507 (NEDP…EDSY). Positions 67–175 (QGLETEPLST…RLSARQDYWV (109 aa)) are required for interaction with HDAC1. Residues 398–410 (EGDSSPSSDGQPS) are compositionally biased toward low complexity. Residues 481–492 (TPEPSPATPSPS) are compositionally biased toward pro residues. The segment at 516–644 (TLQEALEVHR…LDQLLQRNAV (129 aa)) is ALMS motif. Positions 598-629 (KRIYNNLPEVKKKKEEQKKRMILQSNRLRAEV) form a coiled coil.

In terms of assembly, interacts with HDAC1; the interaction prevents binding of HDAC1 to CDKN1A/p21 and facilitates the acetylation and stabilization of CDKN1A/p21. Interacts with p53/TP53; the interaction inhibits binding of p53/TP53 and MDM2. Highly expressed in testis. Weak expression found in brain, lung, heart, ovary, thymus, spleen and kidney.

It localises to the cytoplasm. The protein localises to the cytoskeleton. Its subcellular location is the microtubule organizing center. The protein resides in the centrosome. Its function is as follows. Tumor suppressor that is required to sustain G2/M checkpoint after DNA damage. Acts as a p53/TP53 activator by inhibiting MDM2 binding to p53/TP53 and stimulating non-proteolytic polyubiquitination of p53/TP53. Exhibits ubiquitin ligase (E3) activity and assemble ubiquitin polymers through 'Lys-11'- (K11-), 'Lys-29'- (K29-) and 'Lys-63'- (K63)-linkages, independently of the ubiquitin-conjugating enzyme (E2). Promotes p53/TP53-dependent transcription of CDKN1A/p21, leading to robust checkpoint response. Mediates CDKN1A/p21 protein stability in a ubiquitin-independent manner. Interacts with HDAC1 and prevents binding of HDAC1 to CDKN1A/p21 and facilitates the acetylation and stabilization of CDKN1A/p21. May have a role in the assembly of primary cilia. The chain is (E2-independent) E3 ubiquitin-conjugating enzyme FATS from Mus musculus (Mouse).